The following is an 894-amino-acid chain: Protein SEY1 (894 aa).

The interval 1-64 (MGLDVDSVPI…PRALEPAQVT (64 aa)) is disordered. The Cytoplasmic portion of the chain corresponds to 1–768 (MGLDVDSVPI…KRGTVSSMSQ (768 aa)). A compositionally biased stretch (low complexity) spans 9 to 24 (PIAEAAAPSSMAATEP). Polar residues predominate over residues 40 to 53 (APMNTDSSRETMPT). Residues 137–359 (GFGYDICAVL…DESYVFKTEY (223 aa)) enclose the GB1/RHD3-type G domain. 147–154 (GSQSTGKS) lines the GTP pocket. A coiled-coil region spans residues 536–559 (KVDDERAQLLDELHTLARTLRANE). The helical transmembrane segment at 769-789 (VPIWMYGVLVVLGWNEAMAVL) threads the bilayer. Residues 790-792 (RNP) lie on the Lumenal side of the membrane. A helical transmembrane segment spans residues 793–813 (VYFTLLCMVLATAYVIWRLNL). At 814 to 894 (GTPVLALASG…DSHPRLPASF (81 aa)) the chain is on the cytoplasmic side. The interval 841–894 (DGTPPSANRAREYRVPSGSTAHVSEKTPHRPLTTSGAAEADTVEDSHPRLPASF) is disordered.

Belongs to the TRAFAC class dynamin-like GTPase superfamily. GB1/RHD3 GTPase family. RHD3 subfamily.

Its subcellular location is the endoplasmic reticulum membrane. In terms of biological role, cooperates with the reticulon proteins and tubule-shaping DP1 family proteins to generate and maintain the structure of the tubular endoplasmic reticulum network. Has GTPase activity, which is required for its function in ER organization. The polypeptide is Protein SEY1 (Malassezia globosa (strain ATCC MYA-4612 / CBS 7966) (Dandruff-associated fungus)).